We begin with the raw amino-acid sequence, 488 residues long: Alkaline nuclease (488 aa).

The protein belongs to the herpesviridae alkaline nuclease family. In terms of assembly, interacts with major DNA-binding protein; this interaction increases the nuclease processivity of the alkaline exonuclease.

The protein resides in the host nucleus. The protein localises to the host cytoplasm. Functionally, plays a role in processing non linear or branched viral DNA intermediates in order to promote the production of mature packaged unit-length linear progeny viral DNA molecules. Exhibits endonuclease and exonuclease activities and accepts both double-stranded and single-stranded DNA as substrate. Exonuclease digestion of DNA is in the 5'-&gt; 3' direction and the products are 5'-monophosphate nucleosides. Additionally, forms a recombinase with the major DNA-binding protein, which displays strand exchange activity. The polypeptide is Alkaline nuclease (U70) (Homo sapiens (Human)).